Reading from the N-terminus, the 126-residue chain is Aspartate 1-decarboxylase (126 aa).

Residue serine 25 is the Schiff-base intermediate with substrate; via pyruvic acid of the active site. Pyruvic acid (Ser) is present on serine 25. Threonine 57 contacts substrate. The Proton donor role is filled by tyrosine 58. 73–75 (GAA) is a substrate binding site.

The protein belongs to the PanD family. Heterooctamer of four alpha and four beta subunits. The cofactor is pyruvate. Is synthesized initially as an inactive proenzyme, which is activated by self-cleavage at a specific serine bond to produce a beta-subunit with a hydroxyl group at its C-terminus and an alpha-subunit with a pyruvoyl group at its N-terminus.

The protein localises to the cytoplasm. It carries out the reaction L-aspartate + H(+) = beta-alanine + CO2. It functions in the pathway cofactor biosynthesis; (R)-pantothenate biosynthesis; beta-alanine from L-aspartate: step 1/1. Catalyzes the pyruvoyl-dependent decarboxylation of aspartate to produce beta-alanine. The sequence is that of Aspartate 1-decarboxylase from Alcanivorax borkumensis (strain ATCC 700651 / DSM 11573 / NCIMB 13689 / SK2).